Consider the following 736-residue polypeptide: Gephyrin (736 aa).

The interval 14 to 153 (QIRVGVLTVS…LPGSKKGSQE (140 aa)) is MPT Mo-transferase. 2 disordered regions span residues 181–232 (DELE…DSSS) and 260–290 (TASL…PKVQ). Positions 187-199 (PSPPPPLSPPPTT) are enriched in pro residues. The segment covering 261-290 (ASLSTTPSESPRAQATSRLSTASCPTPKVQ) has biased composition (polar residues). The segment at 294 to 736 (SSKENILRAS…VVDVMVIGRL (443 aa)) is MPT adenylyltransferase.

The protein in the N-terminal section; belongs to the MoaB/Mog family. This sequence in the C-terminal section; belongs to the MoeA family. Homotrimer, homodimer and homooligomer. Interacts with glycine receptors. Mg(2+) is required as a cofactor.

The protein resides in the postsynaptic cell membrane. It is found in the cell membrane. It localises to the cytoplasm. The protein localises to the cytosol. Its subcellular location is the cytoskeleton. The protein resides in the cell projection. It is found in the dendrite. It localises to the postsynaptic density. The catalysed reaction is molybdopterin + ATP + H(+) = adenylyl-molybdopterin + diphosphate. The enzyme catalyses adenylyl-molybdopterin + molybdate = Mo-molybdopterin + AMP + H(+). It participates in cofactor biosynthesis; molybdopterin biosynthesis. Its function is as follows. Microtubule-associated protein involved in membrane protein-cytoskeleton interactions. It is thought to anchor the inhibitory glycine receptor (GLYR) to subsynaptic microtubules. Acts as a major instructive molecule at inhibitory synapses, where it also clusters GABA type A receptors. Also has a catalytic activity and catalyzes two steps in the biosynthesis of the molybdenum cofactor. In the first step, molybdopterin is adenylated. Subsequently, molybdate is inserted into adenylated molybdopterin and AMP is released. This is Gephyrin (GPHN) from Gallus gallus (Chicken).